Reading from the N-terminus, the 64-residue chain is Conotoxin Ca5.3 (64 aa).

Positions 1–22 (MRCVPVFIILLLLIASAPGVDA) are cleaved as a signal peptide. The propeptide occupies 23–48 (QPKTKYNAPLTSLHDNAKGILQEHWN). I61 carries the post-translational modification Isoleucine amide.

It belongs to the conotoxin T superfamily. In terms of processing, contains 2 disulfide bonds that can be either 'C1-C3, C2-C4' or 'C1-C4, C2-C3', since these disulfide connectivities have been observed for conotoxins with cysteine framework V (for examples, see AC P0DQQ7 and AC P81755). As to expression, expressed by the venom duct.

Its subcellular location is the secreted. The polypeptide is Conotoxin Ca5.3 (Conus caracteristicus (Characteristic cone)).